A 159-amino-acid polypeptide reads, in one-letter code: NADH-quinone oxidoreductase subunit B (159 aa).

The [4Fe-4S] cluster site is built by Cys-37, Cys-38, Cys-102, and Cys-132.

It belongs to the complex I 20 kDa subunit family. NDH-1 is composed of 14 different subunits. Subunits NuoB, C, D, E, F, and G constitute the peripheral sector of the complex. [4Fe-4S] cluster is required as a cofactor.

The protein localises to the cell inner membrane. The catalysed reaction is a quinone + NADH + 5 H(+)(in) = a quinol + NAD(+) + 4 H(+)(out). In terms of biological role, NDH-1 shuttles electrons from NADH, via FMN and iron-sulfur (Fe-S) centers, to quinones in the respiratory chain. Couples the redox reaction to proton translocation (for every two electrons transferred, four hydrogen ions are translocated across the cytoplasmic membrane), and thus conserves the redox energy in a proton gradient. The polypeptide is NADH-quinone oxidoreductase subunit B (Vesicomyosocius okutanii subsp. Calyptogena okutanii (strain HA)).